Here is an 82-residue protein sequence, read N- to C-terminus: Photosystem I iron-sulfur center (82 aa).

4Fe-4S ferredoxin-type domains follow at residues 2-31 (AHSV…MVPW) and 40-69 (IAAA…IRVY). [4Fe-4S] cluster contacts are provided by cysteine 11, cysteine 14, cysteine 17, cysteine 21, cysteine 49, cysteine 52, cysteine 55, and cysteine 59.

In terms of assembly, the cyanobacterial PSI reaction center is composed of one copy each of PsaA,B,C,D,E,F,I,J,K,L,M and X, and forms trimeric complexes. Requires [4Fe-4S] cluster as cofactor.

The protein resides in the cellular thylakoid membrane. The catalysed reaction is reduced [plastocyanin] + hnu + oxidized [2Fe-2S]-[ferredoxin] = oxidized [plastocyanin] + reduced [2Fe-2S]-[ferredoxin]. Its function is as follows. Apoprotein for the two 4Fe-4S centers FA and FB of photosystem I (PSI); essential for photochemical activity. FB is the terminal electron acceptor of PSI, donating electrons to ferredoxin. The C-terminus interacts with PsaA/B/D and helps assemble the protein into the PSI complex. Required for binding of PsaD and PsaE to PSI. PSI is a plastocyanin/cytochrome c6-ferredoxin oxidoreductase, converting photonic excitation into a charge separation, which transfers an electron from the donor P700 chlorophyll pair to the spectroscopically characterized acceptors A0, A1, FX, FA and FB in turn. This Synechococcus sp. (strain JA-2-3B'a(2-13)) (Cyanobacteria bacterium Yellowstone B-Prime) protein is Photosystem I iron-sulfur center.